The sequence spans 1460 residues: Nucleoporin NUP159 (1460 aa).

The interaction with DBP5 stretch occupies residues 1–500 (MSSLKDEVPT…SEQDATDPAS (500 aa)). An FG 1 repeat occupies 228–231 (AVFG). Residues 267–270 (PPFG) form a PXFG 1 repeat. A disordered region spans residues 401 to 435 (KSLSPTSEKIPIAGQEQEEKKKNNESSKALSENPF). Ser-404 bears the Phosphoserine mark. The stretch at 462 to 470 (STFGAPSFG) is one SXFGXPXFG 1 repeat. The disordered stretch occupies residues 483-504 (STSTGVASSEQDATDPASAKPV). Residues 497 to 701 (DPASAKPVFG…KPNTSTKPKT (205 aa)) are interactions with CRM1 and GLE1. One copy of the SXFGXPXFG 2; approximate repeat lies at 503-511 (PVFGKPAFG). The stretch at 522–530 (YAFGKPSFG) is one SXFGXPXFG 3; approximate repeat. One copy of the PXFG 2 repeat lies at 532–535 (PSFG). Positions 533–619 (SFGSGKSSVE…SAFGTASSNE (87 aa)) are disordered. Composition is skewed to polar residues over residues 536 to 546 (SGKSSVESPAS), 556 to 567 (GTPSFGSGNSSV), 582 to 593 (GTPSFGSGNSSA), and 607 to 619 (FGTSAFGTASSNE). An SXFGXPXFG 4 repeat occupies 548-556 (SAFGKPSFG). The stretch at 558–561 (PSFG) is one PXFG 3 repeat. The stretch at 574–582 (SAFGKPSFG) is one SXFGXPXFG 5 repeat. A PXFG 4 repeat occupies 584-587 (PSFG). Residues 600 to 608 (SAFGKPSFG) form an SXFGXPXFG 6 repeat. Residues 610–613 (SAFG) form an SXFG 1 repeat. Residues 624 to 632 (SIFGKAAFG) form an SXFGXPXFG 7; approximate repeat. Residues 642-645 (ELFG) form an FG 2 repeat. The disordered stretch occupies residues 647–704 (NFTISKPTVDSPKEVDSTSPFPSSGDQSEDESKSDVDSSSTPFGTKPNTSTKPKTNAF). The residue at position 657 (Ser-657) is a Phosphoserine. The segment covering 683–704 (DSSSTPFGTKPNTSTKPKTNAF) has biased composition (low complexity). The FG 3 repeat unit spans residues 687-690 (TPFG). The stretch at 704 to 707 (FDFG) is one FXFG 1 repeat. An SXFG 2 repeat occupies 709 to 712 (SSFG). The residue at position 724 (Ser-724) is a Phosphoserine. Composition is skewed to polar residues over residues 727-750 (TFKFGTQASPFSSQLGNKSPFSSF), 757-767 (NGSLSKGSTSE), and 778-800 (NGPNVSGNDLTDSTVEQTSSTRL). Positions 727 to 824 (TFKFGTQASP…EAQKSPIGKL (98 aa)) are disordered. An FXFG 2 repeat occupies 728–731 (FKFG). Residues Ser-735 and Ser-745 each carry the phosphoserine modification. A Phosphothreonine modification is found at Thr-803. The segment covering 804–814 (PSDEDGEVVEE) has biased composition (acidic residues). Residues Ser-805 and Ser-819 each carry the phosphoserine modification. The stretch at 842-845 (PVFG) is one PXFG 5 repeat. Over residues 861-889 (TNITKPSSTTPAFSFGNSTMNKSNTSTVS) the composition is skewed to polar residues. A disordered region spans residues 861-1092 (TNITKPSSTT…DINTDELPHG (232 aa)). An FXFG 3 repeat occupies 873–876 (FSFG). Ser-889 is subject to Phosphoserine. A compositionally biased stretch (basic and acidic residues) spans 917–936 (AKEERTGESSKKDHNDDPKD). Residue Ser-940 is modified to Phosphoserine. The span at 942–958 (SEISVRTSESAFDTTAN) shows a compositional bias: polar residues. Composition is skewed to basic and acidic residues over residues 960–1002 (EIPK…KNNE), 1017–1027 (ALKKDNEKENF), 1035–1061 (QFEDHQSSEEDASEKDSRQSSEVKESD), and 1068–1092 (SDRDESISESYDKLEDINTDELPHG). The interaction with DYN2 stretch occupies residues 1086 to 1175 (TDELPHGGEA…TCNFSVQTFE (90 aa)). The segment at 1223–1460 (AEFTVLMENI…DFFKNLNMAK (238 aa)) is interaction with NUP82. Coiled coils occupy residues 1279 to 1320 (EQMQ…YLFL) and 1383 to 1418 (AKLAKESLARDGLLKEIKLLREQVSRLQLEEKGKKA).

Component of the nuclear pore complex (NPC). NPC constitutes the exclusive means of nucleocytoplasmic transport. NPCs allow the passive diffusion of ions and small molecules and the active, nuclear transport receptor-mediated bidirectional transport of macromolecules such as proteins, RNAs, ribonucleoparticles (RNPs), and ribosomal subunits across the nuclear envelope. Due to its 8-fold rotational symmetry, all subunits are present with 8 copies or multiples thereof. Part of the NUP82 subcomplex, interacts with NUP82 through its C-terminal coiled coil. This subcomplex is the base for interactions with NUP116 and GLE2, with NUP42 and GLE1 and with DYN2. Interacts directly with DYN2. Interacts through its FG repeats with karyopherins, such as heterodimeric mRNA transport factor MEX67/MTR2, CRM1 (XPO1), and PSE1 (GSP1-GDP dependent). Interaction with CRM1 (XPO1) is GSP1-GTP dependent and stimulated by RNA1. NUP159 also interacts with GLE1 and the ATP-dependent RNA helicase DBP5.

The protein localises to the nucleus. It localises to the nuclear pore complex. The protein resides in the nucleus membrane. Its function is as follows. Functions as a component of the nuclear pore complex (NPC). NPC components, collectively referred to as nucleoporins (NUPs), can play the role of both NPC structural components and of docking or interaction partners for transiently associated nuclear transport factors. Active directional transport is assured by both, a Phe-Gly (FG) repeat affinity gradient for these transport factors across the NPC and a transport cofactor concentration gradient across the nuclear envelope (GSP1 and GSP2 GTPases associated predominantly with GTP in the nucleus, with GDP in the cytoplasm). NUP159 plays an important role in several nuclear export pathways including poly(A)+ RNA, pre-ribosome, and protein export. This chain is Nucleoporin NUP159 (NUP159), found in Saccharomyces cerevisiae (strain ATCC 204508 / S288c) (Baker's yeast).